Reading from the N-terminus, the 290-residue chain is tRNA dimethylallyltransferase (290 aa).

9–16 (GPTASGKT) is a binding site for ATP. A substrate-binding site is contributed by 11-16 (TASGKT). The interaction with substrate tRNA stretch occupies residues 34 to 37 (DSTQ).

This sequence belongs to the IPP transferase family. As to quaternary structure, monomer. Mg(2+) serves as cofactor.

It catalyses the reaction adenosine(37) in tRNA + dimethylallyl diphosphate = N(6)-dimethylallyladenosine(37) in tRNA + diphosphate. Functionally, catalyzes the transfer of a dimethylallyl group onto the adenine at position 37 in tRNAs that read codons beginning with uridine, leading to the formation of N6-(dimethylallyl)adenosine (i(6)A). The sequence is that of tRNA dimethylallyltransferase from Phytoplasma australiense.